The primary structure comprises 81 residues: Sulfur carrier protein TusA (81 aa).

Cys19 acts as the Cysteine persulfide intermediate in catalysis.

This sequence belongs to the sulfur carrier protein TusA family. As to quaternary structure, interacts with IscS.

It localises to the cytoplasm. Its pathway is tRNA modification. In terms of biological role, sulfur carrier protein involved in sulfur trafficking in the cell. Part of a sulfur-relay system required for 2-thiolation during synthesis of 2-thiouridine of the modified wobble base 5-methylaminomethyl-2-thiouridine (mnm(5)s(2)U) in tRNA. Interacts with IscS and stimulates its cysteine desulfurase activity. Accepts an activated sulfur from IscS, which is then transferred to TusD, and thus determines the direction of sulfur flow from IscS to 2-thiouridine formation. Also appears to be involved in sulfur transfer for the biosynthesis of molybdopterin. This chain is Sulfur carrier protein TusA, found in Shigella boydii serotype 18 (strain CDC 3083-94 / BS512).